A 296-amino-acid chain; its full sequence is Regulatory protein PchR (296 aa).

The HTH araC/xylS-type domain maps to 201-296; it reads HAARDLLVGA…RYGISPSEIR (96 aa). 2 DNA-binding regions (H-T-H motif) span residues 218-239 and 266-288; these read DTLASRVGMNPRKLTAGFRKVF and VSTVAYRVGYSPAHFSIAFRKRY.

Functionally, positive activator of the genes for pyochelin and ferripyochelin receptors. This chain is Regulatory protein PchR (pchR), found in Pseudomonas aeruginosa (strain ATCC 15692 / DSM 22644 / CIP 104116 / JCM 14847 / LMG 12228 / 1C / PRS 101 / PAO1).